Here is a 782-residue protein sequence, read N- to C-terminus: LPS-assembly protein LptD (782 aa).

The first 23 residues, 1–23 (MNKKHTLISLAILTALYSQQSLA), serve as a signal peptide directing secretion.

This sequence belongs to the LptD family. As to quaternary structure, component of the lipopolysaccharide transport and assembly complex. Interacts with LptE and LptA.

The protein localises to the cell outer membrane. Its function is as follows. Together with LptE, is involved in the assembly of lipopolysaccharide (LPS) at the surface of the outer membrane. The protein is LPS-assembly protein LptD of Haemophilus influenzae (strain 86-028NP).